A 593-amino-acid polypeptide reads, in one-letter code: Proteasome-associated ATPase (593 aa).

The stretch at 5–94 (DDADSRAARW…KEEIDRLAQP (90 aa)) forms a coiled coil. 281-286 (GCGKTL) is an ATP binding site. Positions 574–593 (GKGADAGRSIETASNTGQYL) are disordered. Residues 584–593 (ETASNTGQYL) are compositionally biased toward polar residues. The segment at 592–593 (YL) is docks into pockets in the proteasome alpha-ring.

It belongs to the AAA ATPase family. As to quaternary structure, homohexamer. Assembles into a hexameric ring structure that caps the 20S proteasome core. Strongly interacts with the prokaryotic ubiquitin-like protein Pup through a hydrophobic interface; the interacting region of ARC lies in its N-terminal coiled-coil domain. There is one Pup binding site per ARC hexamer ring. Upon ATP-binding, the C-terminus of ARC interacts with the alpha-rings of the proteasome core, possibly by binding to the intersubunit pockets.

The protein operates within protein degradation; proteasomal Pup-dependent pathway. In terms of biological role, ATPase which is responsible for recognizing, binding, unfolding and translocation of pupylated proteins into the bacterial 20S proteasome core particle. May be essential for opening the gate of the 20S proteasome via an interaction with its C-terminus, thereby allowing substrate entry and access to the site of proteolysis. Thus, the C-termini of the proteasomal ATPase may function like a 'key in a lock' to induce gate opening and therefore regulate proteolysis. This Salinispora tropica (strain ATCC BAA-916 / DSM 44818 / JCM 13857 / NBRC 105044 / CNB-440) protein is Proteasome-associated ATPase.